A 357-amino-acid polypeptide reads, in one-letter code: Serpentine receptor class epsilon-30 (357 aa).

The next 7 helical transmembrane spans lie at 31–51, 61–81, 121–141, 165–185, 192–212, 253–273, and 283–303; these read IFELSSCILCGYILNLSIFVM, LMFLTVPLFAIWHELIIGKFI, LLIFGGFLQWHTIYSIVFGIL, IPIILTIISQLLSISISLAII, FLARLPFVICAPLSVLVFLFI, LVVVVIFYISICGFGIAALTF, and LIENFLFLHPYPICLTAMFSI.

This sequence belongs to the nematode receptor-like protein sre family.

Its subcellular location is the membrane. This is Serpentine receptor class epsilon-30 (sre-30) from Caenorhabditis elegans.